The following is a 1598-amino-acid chain: Mushroom body large-type Kenyon cell-specific protein 1 (1598 aa).

Disordered regions lie at residues Pro-83–Ala-105, Arg-140–Ile-387, Pro-436–Val-462, and Pro-495–Asn-525. Residues Arg-140–Leu-151 show a composition bias toward basic residues. Residues Gln-164 to Gln-174 are compositionally biased toward low complexity. A compositionally biased stretch (basic and acidic residues) spans Gln-175–Val-191. Positions Ser-210 to Thr-263 are enriched in low complexity. Positions Glu-275–Asp-291 are enriched in acidic residues. Basic and acidic residues-rich tracts occupy residues Gly-292–Asp-305, Leu-315–Arg-324, and Asp-335–Leu-346. Residue Ser-444 is modified to Phosphoserine; by MAPK. The span at Pro-445–Ser-461 shows a compositional bias: low complexity. An HTH psq-type 1 domain is found at Val-582–Glu-634. Residues Thr-610–Lys-630 constitute a DNA-binding region (H-T-H motif). Disordered stretches follow at residues Glu-636–Glu-705, Arg-797–Gln-877, Gly-962–Arg-1045, Glu-1082–Lys-1145, Glu-1248–Phe-1283, and Arg-1301–Gln-1598. A compositionally biased stretch (low complexity) spans Ala-653–Thr-687. The span at Asp-694–Glu-705 shows a compositional bias: acidic residues. Residues Thr-820–Gln-855 show a composition bias toward low complexity. Over residues Val-965–Pro-975 the composition is skewed to gly residues. Over residues Ala-1003–Ala-1021 the composition is skewed to low complexity. In terms of domain architecture, HTH psq-type 2 spans Arg-1034 to Met-1086. The H-T-H motif DNA-binding region spans Val-1062–Glu-1082. Positions Gln-1093–Glu-1102 are enriched in basic and acidic residues. Residues Thr-1103 to Ala-1120 are compositionally biased toward low complexity. Low complexity predominate over residues Gln-1309 to Gln-1318. 2 stretches are compositionally biased toward basic and acidic residues: residues Asp-1383–Asp-1392 and Gly-1407–Thr-1442. Positions Pro-1447–Gln-1466 are enriched in low complexity. The span at Thr-1481–Ser-1497 shows a compositional bias: basic and acidic residues. Residues Gln-1501–Gln-1547 show a composition bias toward low complexity. The segment covering Arg-1562–Ser-1577 has biased composition (polar residues).

Homodimer. In terms of tissue distribution, large-type Kenyon cells of mushroom body.

It is found in the nucleus. Functionally, transcriptional activator which binds to the consensus sequence 5'-CCCTATCGATCGATCTCTACCT-3'. May play a role in higher-order sensory processing. This chain is Mushroom body large-type Kenyon cell-specific protein 1 (Mblk-1), found in Apis mellifera (Honeybee).